A 295-amino-acid polypeptide reads, in one-letter code: Probable CBASS effector molecule IK1_05631 (295 aa).

Transmembrane regions (helical) follow at residues isoleucine 26–tyrosine 46, serine 56–isoleucine 76, isoleucine 167–valine 187, and serine 190–phenylalanine 210.

It is found in the cell membrane. Functionally, effector protein of a CBASS antiviral system. CBASS (cyclic oligonucleotide-based antiphage signaling system) provides immunity against bacteriophage. The CD-NTase protein synthesizes cyclic nucleotides in response to infection; these serve as specific second messenger signals. The signals activate a diverse range of effectors, leading to bacterial cell death and thus abortive phage infection. A type I-B CBASS system. In terms of biological role, protects B.subtilis against phage infection. When IK1_05630 and IK1_05631 are introduced in B.subtilis BEST7003 there is 1000-fold protection against phage SBSphiC. Both genes are required for protection. Activation leads to bacterial cell lysis and death, which occurs before the phage has finished its replication cycle, thus protecting non-infected bacteria by aborting the phage infection and preventing its propagation. This is Probable CBASS effector molecule IK1_05631 from Bacillus cereus (strain VD146).